A 214-amino-acid polypeptide reads, in one-letter code: Adenylate kinase (214 aa).

Residue 10-15 (GAGKGT) coordinates ATP. An NMP region spans residues 30–59 (STGDMLRAAVKAGTPLGLEAKKVMDAGQLV). Residues Thr31, Arg36, 57-59 (QLV), 85-88 (GFPR), and Gln92 contribute to the AMP site. The interval 122–159 (GRRVHPGSGRVYHIVFNQPKVEGKDDVTGEDLAIRPDD) is LID. ATP-binding positions include Arg123 and 132–133 (VY). Arg156 and Arg167 together coordinate AMP. An ATP-binding site is contributed by Gln200.

It belongs to the adenylate kinase family. As to quaternary structure, monomer.

The protein resides in the cytoplasm. The catalysed reaction is AMP + ATP = 2 ADP. Its pathway is purine metabolism; AMP biosynthesis via salvage pathway; AMP from ADP: step 1/1. Functionally, catalyzes the reversible transfer of the terminal phosphate group between ATP and AMP. Plays an important role in cellular energy homeostasis and in adenine nucleotide metabolism. This chain is Adenylate kinase, found in Shewanella woodyi (strain ATCC 51908 / MS32).